A 348-amino-acid chain; its full sequence is Hereditary hemochromatosis protein (348 aa).

Positions 1-22 (MGPRARPALLLLMLLQTAVLQG) are cleaved as a signal peptide. The tract at residues 23 to 114 (RLLRSHSLHY…IMENHNHSKE (92 aa)) is alpha-1. Residues 23 to 306 (RLLRSHSLHY…WEPSPSGTLV (284 aa)) lie on the Extracellular side of the membrane. 3 N-linked (GlcNAc...) asparagine glycosylation sites follow: Asn110, Asn130, and Asn234. The segment at 115–205 (SHTLQVILGC…ELGRGVLDQQ (91 aa)) is alpha-2. Cystine bridges form between Cys124-Cys187 and Cys225-Cys282. The segment at 206-297 (VPPLVKVTHH…GLDQPLIVIW (92 aa)) is alpha-3. The Ig-like C1-type domain occupies 207-298 (PPLVKVTHHV…LDQPLIVIWE (92 aa)). The interval 298–306 (EPSPSGTLV) is connecting peptide. The helical transmembrane segment at 307-330 (IGVISGIAVFVVILFIGILFIILR) threads the bilayer. Residues 331–348 (KRQGSRGAMGHYVLAERE) are Cytoplasmic-facing.

The protein belongs to the MHC class I family. As to quaternary structure, binds TFR through the extracellular domain in a pH-dependent manner. Expressed in all tissues tested except brain.

The protein localises to the cell membrane. Functionally, binds to transferrin receptor (TFR) and reduces its affinity for iron-loaded transferrin. In Homo sapiens (Human), this protein is Hereditary hemochromatosis protein (HFE).